Consider the following 247-residue polypeptide: Cyclin-Q (247 aa).

This sequence belongs to the cyclin family. Cyclin-like FAM58 subfamily.

In terms of biological role, may be an activating cyclin for the cyclin-associated kinase CDK10. The polypeptide is Cyclin-Q (ccnq) (Danio rerio (Zebrafish)).